A 470-amino-acid polypeptide reads, in one-letter code: 1-aminocyclopropane-1-carboxylate synthase 5 (470 aa).

The substrate site is built by Glu47 and Tyr85. Lys272 is subject to N6-(pyridoxal phosphate)lysine. Ser461 is subject to Phosphoserine.

This sequence belongs to the class-I pyridoxal-phosphate-dependent aminotransferase family. Homodimer and heterodimer. In vivo, the relevance of heterodimerization with other ACS enzymes is however unsure. Interacts (via its C-terminal region) with FEI1, FEI2, ETO1, EOL1 and EOL2. Interacts with GRF3. Pyridoxal 5'-phosphate serves as cofactor. Post-translationally, may be processed at its C-terminus. Ubiquitinated. The interaction with ETO1 (and possibly EOL1 and EOL2) mediate its proteasome-dependent degradation. Its stability and degradation plays a central role in ethylene biosynthesis. As to expression, expressed in roots and siliques.

It catalyses the reaction S-adenosyl-L-methionine = 1-aminocyclopropane-1-carboxylate + S-methyl-5'-thioadenosine + H(+). Its pathway is alkene biosynthesis; ethylene biosynthesis via S-adenosyl-L-methionine; ethylene from S-adenosyl-L-methionine: step 1/2. Functionally, 1-aminocyclopropane-1-carboxylate synthase (ACS) enzymes catalyze the conversion of S-adenosyl-L-methionine (SAM) into 1-aminocyclopropane-1-carboxylate (ACC), a direct precursor of ethylene. This Arabidopsis thaliana (Mouse-ear cress) protein is 1-aminocyclopropane-1-carboxylate synthase 5 (ACS5).